A 208-amino-acid chain; its full sequence is Uracil phosphoribosyltransferase (208 aa).

Residues arginine 78, arginine 103, and 130–138 contribute to the 5-phospho-alpha-D-ribose 1-diphosphate site; that span reads DPMLATGGS. Uracil contacts are provided by residues isoleucine 193 and 198–200; that span reads GDA. Aspartate 199 serves as a coordination point for 5-phospho-alpha-D-ribose 1-diphosphate.

The protein belongs to the UPRTase family. It depends on Mg(2+) as a cofactor.

The catalysed reaction is UMP + diphosphate = 5-phospho-alpha-D-ribose 1-diphosphate + uracil. Its pathway is pyrimidine metabolism; UMP biosynthesis via salvage pathway; UMP from uracil: step 1/1. With respect to regulation, allosterically activated by GTP. In terms of biological role, catalyzes the conversion of uracil and 5-phospho-alpha-D-ribose 1-diphosphate (PRPP) to UMP and diphosphate. The protein is Uracil phosphoribosyltransferase of Pectobacterium atrosepticum (strain SCRI 1043 / ATCC BAA-672) (Erwinia carotovora subsp. atroseptica).